Here is a 179-residue protein sequence, read N- to C-terminus: Translation initiation factor IF-3 (179 aa).

It belongs to the IF-3 family. In terms of assembly, monomer.

The protein localises to the cytoplasm. In terms of biological role, IF-3 binds to the 30S ribosomal subunit and shifts the equilibrium between 70S ribosomes and their 50S and 30S subunits in favor of the free subunits, thus enhancing the availability of 30S subunits on which protein synthesis initiation begins. This is Translation initiation factor IF-3 from Bradyrhizobium diazoefficiens (strain JCM 10833 / BCRC 13528 / IAM 13628 / NBRC 14792 / USDA 110).